The sequence spans 973 residues: Mediator of RNA polymerase II transcription subunit 16 (973 aa).

It belongs to the Mediator complex subunit 16 family. Component of the Mediator complex.

Its subcellular location is the nucleus. Component of the Mediator complex, a coactivator involved in the regulated transcription of nearly all RNA polymerase II-dependent genes. Mediator functions as a bridge to convey information from gene-specific regulatory proteins to the basal RNA polymerase II transcription machinery. Mediator is recruited to promoters by direct interactions with regulatory proteins and serves as a scaffold for the assembly of a functional preinitiation complex with RNA polymerase II and the general transcription factors. The sequence is that of Mediator of RNA polymerase II transcription subunit 16 (SIN4) from Candida glabrata (strain ATCC 2001 / BCRC 20586 / JCM 3761 / NBRC 0622 / NRRL Y-65 / CBS 138) (Yeast).